A 377-amino-acid chain; its full sequence is Multiple sugar-binding transport ATP-binding protein MsmK (377 aa).

Positions 4–246 constitute an ABC transporter domain; the sequence is LNLNHIYKKY…PANKFVAGFI (243 aa). 38-45 lines the ATP pocket; the sequence is GPSGCGKS.

The protein belongs to the ABC transporter superfamily.

It is found in the cell membrane. Its function is as follows. Involved in a binding protein-dependent transport system responsible for the uptake of melibiose, raffinose and isomaltotriose. Probably responsible for energy coupling to the transport system. The chain is Multiple sugar-binding transport ATP-binding protein MsmK (msmK) from Streptococcus mutans serotype c (strain ATCC 700610 / UA159).